The chain runs to 173 residues: Thiol-disulfide oxidoreductase ResA (173 aa).

The chain crosses the membrane as a helical; Signal-anchor for type II membrane protein span at residues 10–29 (VIILLILSGAVGFTLYQGYF). In terms of domain architecture, Thioredoxin spans 35 to 173 (MEIGKEAPNF…LEEYLKKITP (139 aa)). Cysteines 73 and 76 form a disulfide.

This sequence belongs to the thioredoxin family. ResA subfamily.

Its subcellular location is the cell membrane. The protein operates within protein modification; cytochrome c assembly. In terms of biological role, thiol-disulfide oxidoreductase which is required in disulfide reduction during c-type cytochrome synthesis. May accept reducing equivalents from CcdA, leading to breakage of disulfide bonds in apocytochrome c; following this reduction heme can be covalently attached. This is Thiol-disulfide oxidoreductase ResA from Bacillus cereus (strain ATCC 10987 / NRS 248).